Reading from the N-terminus, the 323-residue chain is Chitin-binding lectin 1 (323 aa).

Residues 1 to 22 form the signal peptide; sequence MKETAISVLALLTLFLLEVVSA. 4 positions are modified to 4-hydroxyproline: proline 50, proline 51, proline 53, and proline 55. 4 O-linked (Ara...) hydroxyproline glycosylation sites follow: proline 50, proline 51, proline 53, and proline 55. 2 Chitin-binding type-1 domains span residues 58–101 and 105–149; these read YPQC…QCPG and EGRC…QCKL. Disulfide bonds link cysteine 61–cysteine 77, cysteine 70–cysteine 83, cysteine 76–cysteine 90, cysteine 95–cysteine 99, cysteine 108–cysteine 125, cysteine 117–cysteine 131, cysteine 124–cysteine 138, and cysteine 143–cysteine 147. Serine 78, tryptophan 80, tryptophan 82, and tyrosine 89 together coordinate chitin. Residues 150–210 are extensin-like; that stretch reads PSPPPPPPPP…PPPPPPALPY (61 aa). O-linked (Gal) serine glycosylation occurs at serine 151. 10 tandem repeats follow at residues 151–159, 160–164, 165–167, 168–172, 173–180, 181–185, 186–190, 191–192, 193–198, and 200–206. The segment at 151–206 is 10 X approximate repeats of S-P-P-P-P; it reads SPPPPPPPPSPPPPSPPSPPPPSPPPPPPPSPPPPSPPPPSPSPPPPPASPPPPPP. 8 positions are modified to 4-hydroxyproline: proline 152, proline 153, proline 154, proline 155, proline 156, proline 157, proline 158, and proline 159. O-linked (Ara...) hydroxyproline glycans are attached at residues proline 152, proline 153, proline 154, proline 155, proline 156, proline 157, proline 158, and proline 159. The tract at residues 154-203 is disordered; sequence PPPPPPSPPPPSPPSPPPPSPPPPPPPSPPPPSPPPPSPSPPPPPASPPP. An O-linked (Gal) serine glycan is attached at serine 160. 4 positions are modified to 4-hydroxyproline: proline 161, proline 162, proline 163, and proline 164. O-linked (Ara...) hydroxyproline glycans are attached at residues proline 161, proline 162, proline 163, and proline 164. O-linked (Gal) serine glycosylation occurs at serine 165. Residues proline 166 and proline 167 each carry the 4-hydroxyproline modification. O-linked (Ara...) hydroxyproline glycans are attached at residues proline 166 and proline 167. Residue serine 168 is glycosylated (O-linked (Gal) serine). 4-hydroxyproline is present on residues proline 169, proline 170, proline 171, and proline 172. Residues proline 169, proline 170, proline 171, and proline 172 are each glycosylated (O-linked (Ara...) hydroxyproline). Serine 173 carries an O-linked (Gal) serine glycan. Proline 174, proline 175, proline 176, proline 177, proline 178, proline 179, and proline 180 each carry 4-hydroxyproline. 7 O-linked (Ara...) hydroxyproline glycosylation sites follow: proline 174, proline 175, proline 176, proline 177, proline 178, proline 179, and proline 180. A glycan (O-linked (Gal) serine) is linked at serine 181. A 4-hydroxyproline mark is found at proline 182, proline 183, proline 184, and proline 185. Proline 182, proline 183, proline 184, and proline 185 each carry an O-linked (Ara...) hydroxyproline glycan. O-linked (Gal) serine glycosylation occurs at serine 186. A 4-hydroxyproline mark is found at proline 187, proline 188, proline 189, and proline 190. 4 O-linked (Ara...) hydroxyproline glycosylation sites follow: proline 187, proline 188, proline 189, and proline 190. A glycan (O-linked (Gal) serine) is linked at serine 191. 4-hydroxyproline is present on proline 192. Proline 192 is a glycosylation site (O-linked (Ara...) hydroxyproline). O-linked (Gal) serine glycosylation occurs at serine 193. Residues proline 194, proline 195, proline 196, proline 197, and proline 198 each carry the 4-hydroxyproline modification. O-linked (Ara...) hydroxyproline glycans are attached at residues proline 194, proline 195, proline 196, proline 197, and proline 198. Serine 200 carries O-linked (Gal) serine glycosylation. Proline 201, proline 202, proline 203, proline 204, proline 205, proline 206, and proline 209 each carry 4-hydroxyproline. Residues proline 201, proline 202, proline 203, proline 204, proline 205, proline 206, and proline 209 are each glycosylated (O-linked (Ara...) hydroxyproline). 2 consecutive Chitin-binding type-1 domains span residues 210-253 and 257-301; these read YPQC…QCPG and EGRC…QCNT. 8 disulfide bridges follow: cysteine 213-cysteine 229, cysteine 222-cysteine 235, cysteine 228-cysteine 242, cysteine 247-cysteine 251, cysteine 260-cysteine 277, cysteine 269-cysteine 283, cysteine 276-cysteine 290, and cysteine 295-cysteine 299. Residues serine 230, tryptophan 232, tryptophan 234, and tyrosine 241 each contribute to the chitin site.

The protein in the central section; belongs to the extensin family. Homodimer. Heavily glycosylated with beta-arabinose on hydroxyprolines and with alpha-galactose on serines of the extensin-like domain. As no other sugars could be detected in the native lectin, it is unlikely that the three putative N-glycosylation sites are actually glycosylated. In terms of processing, the N-terminus is blocked. The N-terminal sequences proposed in PubMed:9022287 and PubMed:11056399 originate probably from truncated proteins.

This protein might function as a defense against chitin containing pathogens. Binds to several branched or linear N-acetyllactosamine-containing glycosphingolipids and also to lactosylceramide with sphingosine and non-hydroxy fatty acids. This chain is Chitin-binding lectin 1, found in Solanum tuberosum (Potato).